The following is a 375-amino-acid chain: Alcohol dehydrogenase 1 (375 aa).

S2 bears the N-acetylserine mark. 7 residues coordinate Zn(2+): C47, H68, C98, C101, C104, C112, and C175. NAD(+) is bound by residues 200–205, D224, K229, 293–295, and R370; these read GLGGVG and LGV.

This sequence belongs to the zinc-containing alcohol dehydrogenase family. Class-I subfamily. In terms of assembly, homodimer. Zn(2+) serves as cofactor.

The protein resides in the cytoplasm. The catalysed reaction is a primary alcohol + NAD(+) = an aldehyde + NADH + H(+). It carries out the reaction a secondary alcohol + NAD(+) = a ketone + NADH + H(+). This chain is Alcohol dehydrogenase 1 (ADH1), found in Apteryx australis (Southern brown kiwi).